We begin with the raw amino-acid sequence, 864 residues long: Leucine--tRNA ligase (864 aa).

Residues 42–52 (PYPSGKLHMGH) carry the 'HIGH' region motif. Residues 624-628 (KMSKS) carry the 'KMSKS' region motif. K627 serves as a coordination point for ATP.

This sequence belongs to the class-I aminoacyl-tRNA synthetase family.

It localises to the cytoplasm. The enzyme catalyses tRNA(Leu) + L-leucine + ATP = L-leucyl-tRNA(Leu) + AMP + diphosphate. The polypeptide is Leucine--tRNA ligase (Burkholderia lata (strain ATCC 17760 / DSM 23089 / LMG 22485 / NCIMB 9086 / R18194 / 383)).